Consider the following 318-residue polypeptide: N-acetyl-gamma-glutamyl-phosphate reductase (318 aa).

Cys-132 is an active-site residue.

It belongs to the NAGSA dehydrogenase family. Type 1 subfamily.

The protein localises to the cytoplasm. The catalysed reaction is N-acetyl-L-glutamate 5-semialdehyde + phosphate + NADP(+) = N-acetyl-L-glutamyl 5-phosphate + NADPH + H(+). It functions in the pathway amino-acid biosynthesis; L-arginine biosynthesis; N(2)-acetyl-L-ornithine from L-glutamate: step 3/4. In terms of biological role, catalyzes the NADPH-dependent reduction of N-acetyl-5-glutamyl phosphate to yield N-acetyl-L-glutamate 5-semialdehyde. In Azobacteroides pseudotrichonymphae genomovar. CFP2, this protein is N-acetyl-gamma-glutamyl-phosphate reductase.